The primary structure comprises 190 residues: Iron-sulfur protein (190 aa).

Positions 8-36 (VIIYANPDHCLSCHSCELACAVAHSGGHD) constitute a 4Fe-4S ferredoxin-type 1 domain. 16 residues coordinate [4Fe-4S] cluster: Cys-17, Cys-20, Cys-23, Cys-27, Cys-65, Cys-68, Cys-73, Cys-77, Cys-96, Cys-99, Cys-102, Cys-106, Cys-133, Cys-136, Cys-150, and Cys-154. 2 consecutive 4Fe-4S ferredoxin-type domains span residues 87-116 (GQVQIVEQHCIGCKLCVMVCPFGAITVRSE) and 133-164 (CDLCVDWRASTGKTAPACVEACPTKAIRMVDL).

In terms of biological role, the carbon monoxide dehydrogenase (CODH) oxidizes carbon monoxide coupled, via CooF, to the reduction of a hydrogen cation by a hydrogenase (probably CooH). CooF is required in stoichiometric amounts in vitro for anchoring CODH to the membrane as well as for conveying the electrons to the hydrogenase. In Rhodospirillum rubrum, this protein is Iron-sulfur protein (cooF).